The sequence spans 426 residues: Dihydrofolate synthase/folylpolyglutamate synthase (426 aa).

Residue 58 to 61 (GKGS) participates in ATP binding. Mg(2+) is bound at residue Ser82. 121–124 (TRFE) contacts 7,8-dihydropteroate. Position 145 (Glu145) interacts with Mg(2+). 152–154 (LDA) serves as a coordination point for 7,8-dihydropteroate. His172 lines the Mg(2+) pocket. Residues Arg289 and Asp302 each coordinate ATP.

Belongs to the folylpolyglutamate synthase family. In terms of assembly, monomer. Requires Mg(2+) as cofactor.

It catalyses the reaction 7,8-dihydropteroate + L-glutamate + ATP = 7,8-dihydrofolate + ADP + phosphate + H(+). It carries out the reaction (6S)-5,6,7,8-tetrahydrofolyl-(gamma-L-Glu)(n) + L-glutamate + ATP = (6S)-5,6,7,8-tetrahydrofolyl-(gamma-L-Glu)(n+1) + ADP + phosphate + H(+). The catalysed reaction is 10-formyltetrahydrofolyl-(gamma-L-Glu)(n) + L-glutamate + ATP = 10-formyltetrahydrofolyl-(gamma-L-Glu)(n+1) + ADP + phosphate + H(+). The enzyme catalyses (6R)-5,10-methylenetetrahydrofolyl-(gamma-L-Glu)(n) + L-glutamate + ATP = (6R)-5,10-methylenetetrahydrofolyl-(gamma-L-Glu)(n+1) + ADP + phosphate + H(+). It participates in cofactor biosynthesis; tetrahydrofolate biosynthesis; 7,8-dihydrofolate from 2-amino-4-hydroxy-6-hydroxymethyl-7,8-dihydropteridine diphosphate and 4-aminobenzoate: step 2/2. It functions in the pathway cofactor biosynthesis; tetrahydrofolylpolyglutamate biosynthesis. In terms of biological role, functions in two distinct reactions of the de novo folate biosynthetic pathway. Catalyzes the addition of a glutamate residue to dihydropteroate (7,8-dihydropteroate or H2Pte) to form dihydrofolate (7,8-dihydrofolate monoglutamate or H2Pte-Glu). Also catalyzes successive additions of L-glutamate to tetrahydrofolate or 10-formyltetrahydrofolate or 5,10-methylenetetrahydrofolate, leading to folylpolyglutamate derivatives. The sequence is that of Dihydrofolate synthase/folylpolyglutamate synthase (folC) from Buchnera aphidicola subsp. Baizongia pistaciae (strain Bp).